The primary structure comprises 376 residues: DNA replication and repair protein RecF (376 aa).

Position 30–37 (30–37) interacts with ATP; the sequence is GNNAQGKS.

It belongs to the RecF family.

Its subcellular location is the cytoplasm. The RecF protein is involved in DNA metabolism; it is required for DNA replication and normal SOS inducibility. RecF binds preferentially to single-stranded, linear DNA. It also seems to bind ATP. In Trichormus variabilis (strain ATCC 29413 / PCC 7937) (Anabaena variabilis), this protein is DNA replication and repair protein RecF.